Consider the following 235-residue polypeptide: Urease accessory protein UreF (235 aa).

Belongs to the UreF family. As to quaternary structure, ureD, UreF and UreG form a complex that acts as a GTP-hydrolysis-dependent molecular chaperone, activating the urease apoprotein by helping to assemble the nickel containing metallocenter of UreC. The UreE protein probably delivers the nickel.

The protein resides in the cytoplasm. Required for maturation of urease via the functional incorporation of the urease nickel metallocenter. This is Urease accessory protein UreF from Ureaplasma parvum serovar 3 (strain ATCC 27815 / 27 / NCTC 11736).